The primary structure comprises 769 residues: 5-methyltetrahydropteroyltriglutamate--homocysteine methyltransferase (769 aa).

5-methyltetrahydropteroyltri-L-glutamate-binding positions include Arg-17–Lys-20 and Lys-118. Residues Ile-441–Ser-443 and Glu-494 each bind L-homocysteine. Residues Ile-441–Ser-443 and Glu-494 each bind L-methionine. 5-methyltetrahydropteroyltri-L-glutamate-binding positions include Arg-525 to Cys-526 and Trp-571. Position 609 (Asp-609) interacts with L-homocysteine. L-methionine is bound at residue Asp-609. Residue Glu-615 participates in 5-methyltetrahydropteroyltri-L-glutamate binding. The Zn(2+) site is built by His-651, Cys-653, and Glu-675. Catalysis depends on His-705, which acts as the Proton donor. Residue Cys-737 coordinates Zn(2+).

This sequence belongs to the vitamin-B12 independent methionine synthase family. Zn(2+) is required as a cofactor.

The enzyme catalyses 5-methyltetrahydropteroyltri-L-glutamate + L-homocysteine = tetrahydropteroyltri-L-glutamate + L-methionine. Its pathway is amino-acid biosynthesis; L-methionine biosynthesis via de novo pathway; L-methionine from L-homocysteine (MetE route): step 1/1. Its function is as follows. Catalyzes the transfer of a methyl group from 5-methyltetrahydrofolate to homocysteine resulting in methionine formation. This is 5-methyltetrahydropteroyltriglutamate--homocysteine methyltransferase from Blochmanniella floridana.